The following is a 233-amino-acid chain: 2,3,4,5-tetrahydropyridine-2,6-dicarboxylate N-acetyltransferase (233 aa).

The protein belongs to the transferase hexapeptide repeat family. DapH subfamily.

The catalysed reaction is (S)-2,3,4,5-tetrahydrodipicolinate + acetyl-CoA + H2O = L-2-acetamido-6-oxoheptanedioate + CoA. It functions in the pathway amino-acid biosynthesis; L-lysine biosynthesis via DAP pathway; LL-2,6-diaminopimelate from (S)-tetrahydrodipicolinate (acetylase route): step 1/3. In terms of biological role, catalyzes the transfer of an acetyl group from acetyl-CoA to tetrahydrodipicolinate. This chain is 2,3,4,5-tetrahydropyridine-2,6-dicarboxylate N-acetyltransferase, found in Enterococcus faecalis (strain ATCC 700802 / V583).